A 106-amino-acid polypeptide reads, in one-letter code: Small ribosomal subunit protein uS10 (106 aa).

This sequence belongs to the universal ribosomal protein uS10 family. As to quaternary structure, part of the 30S ribosomal subunit.

Functionally, involved in the binding of tRNA to the ribosomes. This is Small ribosomal subunit protein uS10 from Solibacter usitatus (strain Ellin6076).